Here is an 866-residue protein sequence, read N- to C-terminus: DNA topoisomerase 3-beta (866 aa).

A Toprim domain is found at 4–149; it reads TVLMVAEKPS…RIFRAKFSSV (146 aa). Positions 10, 114, and 116 each coordinate Mg(2+). Residues 165-585 form the Topo IA-type catalytic domain; that stretch reads SKDEALAVDA…HVLQQFMKKY (421 aa). An interaction with DNA region spans residues 207–212; the sequence is SYGPCQ. Residue Tyr-329 is the O-(5'-phospho-DNA)-tyrosine intermediate of the active site. Residues 830–853 are compositionally biased toward basic residues; that stretch reads MRRGRGRGRGRGRGRGSSRGRRGS. The interval 830-866 is disordered; sequence MRRGRGRGRGRGRGRGSSRGRRGSSRHDDPKMSFRDF. Basic and acidic residues predominate over residues 854–866; that stretch reads SRHDDPKMSFRDF.

The protein belongs to the type IA topoisomerase family. Requires Mg(2+) as cofactor.

The catalysed reaction is ATP-independent breakage of single-stranded DNA, followed by passage and rejoining.. Functionally, releases the supercoiling and torsional tension of DNA introduced during the DNA replication and transcription by transiently cleaving and rejoining one strand of the DNA duplex. Introduces a single-strand break via transesterification at a target site in duplex DNA. The scissile phosphodiester is attacked by the catalytic tyrosine of the enzyme, resulting in the formation of a DNA-(5'-phosphotyrosyl)-enzyme intermediate and the expulsion of a 3'-OH DNA strand. The free DNA strand than undergoes passage around the unbroken strand thus removing DNA supercoils. Finally, in the religation step, the DNA 3'-OH attacks the covalent intermediate to expel the active-site tyrosine and restore the DNA phosphodiester backbone. The sequence is that of DNA topoisomerase 3-beta (TOP3B) from Oryza sativa subsp. japonica (Rice).